Reading from the N-terminus, the 447-residue chain is NADP-specific glutamate dehydrogenase (447 aa).

Lys92, Gln113, and Lys116 together coordinate substrate. Lys128 serves as the catalytic Proton donor. Gly167 is a substrate binding site. The NADP(+) site is built by Thr211 and Asn242. Ser380 provides a ligand contact to substrate.

Belongs to the Glu/Leu/Phe/Val dehydrogenases family. In terms of assembly, homohexamer.

The enzyme catalyses L-glutamate + NADP(+) + H2O = 2-oxoglutarate + NH4(+) + NADPH + H(+). With respect to regulation, competitively inhibited by homoserine and by glutamine. Catalyzes the reversible oxidative deamination of glutamate to alpha-ketoglutarate and ammonia. The protein is NADP-specific glutamate dehydrogenase of Escherichia coli (strain K12).